A 99-amino-acid chain; its full sequence is Ubiquitin-related modifier 1 homolog (99 aa).

Gly-99 carries the 1-thioglycine modification. Gly-99 participates in a covalent cross-link: Glycyl lysine isopeptide (Gly-Lys) (interchain with K-? in acceptor proteins).

The protein belongs to the URM1 family. Post-translationally, C-terminal thiocarboxylation occurs in 2 steps, it is first acyl-adenylated (-COAMP) via the hesA/moeB/thiF part of the MOCS3 homolog, then thiocarboxylated (-COSH) via the rhodanese domain of the MOCS3 homolog.

It localises to the cytoplasm. It functions in the pathway tRNA modification; 5-methoxycarbonylmethyl-2-thiouridine-tRNA biosynthesis. Functionally, acts as a sulfur carrier required for 2-thiolation of mcm(5)S(2)U at tRNA wobble positions of cytosolic tRNA(Lys), tRNA(Glu) and tRNA(Gln). Serves as sulfur donor in tRNA 2-thiolation reaction by being thiocarboxylated (-COSH) at its C-terminus by MOCS3. The sulfur is then transferred to tRNA to form 2-thiolation of mcm(5)S(2)U. Also acts as a ubiquitin-like protein (UBL) that is covalently conjugated via an isopeptide bond to lysine residues of target proteins. The thiocarboxylated form serves as substrate for conjugation and oxidative stress specifically induces the formation of UBL-protein conjugates. This Chlamydomonas reinhardtii (Chlamydomonas smithii) protein is Ubiquitin-related modifier 1 homolog.